The sequence spans 90 residues: Small ribosomal subunit protein uS15c (90 aa).

The protein belongs to the universal ribosomal protein uS15 family. In terms of assembly, part of the 30S ribosomal subunit.

Its subcellular location is the plastid. The protein localises to the chloroplast. The sequence is that of Small ribosomal subunit protein uS15c (rps15) from Drimys granadensis.